The primary structure comprises 145 residues: WGATVITNLMSAIPWIGQDIVEFIWGGFSVNNATLNRFFALHFLLPFVLAALVIMHLIAMHDTVGSGNPLGISGNYDRLPFAPYFVFKDLVTVFIFFIVLSVFVFFMPNALGDSENYVMANPMQTPPAIVPEWYLLPFYAILRSI.

The chain crosses the membrane as a helical span at residues 38–58; the sequence is FFALHFLLPFVLAALVIMHLI. Heme b contacts are provided by His42 and His56. Residue His61 coordinates a ubiquinone. The chain crosses the membrane as a helical span at residues 85–105; the sequence is FVFKDLVTVFIFFIVLSVFVF.

The protein belongs to the cytochrome b family. As to quaternary structure, fungal cytochrome b-c1 complex contains 10 subunits; 3 respiratory subunits, 2 core proteins and 5 low-molecular weight proteins. Cytochrome b-c1 complex is a homodimer. Heme b is required as a cofactor.

The protein resides in the mitochondrion inner membrane. In terms of biological role, component of the ubiquinol-cytochrome c reductase complex (complex III or cytochrome b-c1 complex) that is part of the mitochondrial respiratory chain. The b-c1 complex mediates electron transfer from ubiquinol to cytochrome c. Contributes to the generation of a proton gradient across the mitochondrial membrane that is then used for ATP synthesis. The polypeptide is Cytochrome b (cob) (Aspergillus fumigatus (Neosartorya fumigata)).